The sequence spans 188 residues: MSLIGTEVQPFRAQAFQSGKDFFEVTEADLKGKWSIVVFYPADFSFVCPTELEDVQKEYAELKKLGVEVYSVSTDTHFVHKAWHENSPAVGSIEYIMIGDPSQTISRQFDVLNEETGLADRGTFIIDPDGVIQAIEINADGIGRDASTLINKVKAAQYVRENPGEVCPAKWEEGGETLKPSLDIVGKI.

The Thioredoxin domain maps to 2 to 158 (SLIGTEVQPF…LINKVKAAQY (157 aa)). Cysteine 48 serves as the catalytic Cysteine sulfenic acid (-SOH) intermediate.

This sequence belongs to the peroxiredoxin family. AhpC/Prx1 subfamily. Homodimer; disulfide-linked, upon oxidation. 5 homodimers assemble to form a ring-like decamer.

It is found in the cytoplasm. The catalysed reaction is a hydroperoxide + NADH + H(+) = an alcohol + NAD(+) + H2O. Thiol-specific peroxidase that catalyzes the reduction of hydrogen peroxide and organic hydroperoxides to water and alcohols, respectively. Plays a role in cell protection against oxidative stress by detoxifying peroxides. This Amphibacillus xylanus (strain ATCC 51415 / DSM 6626 / JCM 7361 / LMG 17667 / NBRC 15112 / Ep01) protein is Alkyl hydroperoxide reductase C (ahpC).